The following is a 158-amino-acid chain: Pleckstrin homology domain-containing family J member 1 (158 aa).

The PH domain maps to 15–108 (PTQRAAELGM…WIDAIIKASY (94 aa)).

The chain is Pleckstrin homology domain-containing family J member 1 (plekhj1) from Danio rerio (Zebrafish).